The chain runs to 412 residues: NADH-quinone oxidoreductase subunit D (412 aa).

Belongs to the complex I 49 kDa subunit family. NDH-1 is composed of 14 different subunits. Subunits NuoB, C, D, E, F, and G constitute the peripheral sector of the complex.

The protein localises to the cell inner membrane. It carries out the reaction a quinone + NADH + 5 H(+)(in) = a quinol + NAD(+) + 4 H(+)(out). NDH-1 shuttles electrons from NADH, via FMN and iron-sulfur (Fe-S) centers, to quinones in the respiratory chain. The immediate electron acceptor for the enzyme in this species is believed to be a menaquinone. Couples the redox reaction to proton translocation (for every two electrons transferred, four hydrogen ions are translocated across the cytoplasmic membrane), and thus conserves the redox energy in a proton gradient. The chain is NADH-quinone oxidoreductase subunit D from Flavobacterium johnsoniae (strain ATCC 17061 / DSM 2064 / JCM 8514 / BCRC 14874 / CCUG 350202 / NBRC 14942 / NCIMB 11054 / UW101) (Cytophaga johnsonae).